A 249-amino-acid polypeptide reads, in one-letter code: tRNA pseudouridine synthase A (249 aa).

The active-site Nucleophile is aspartate 53. A substrate-binding site is contributed by tyrosine 111.

It belongs to the tRNA pseudouridine synthase TruA family. In terms of assembly, homodimer.

The enzyme catalyses uridine(38/39/40) in tRNA = pseudouridine(38/39/40) in tRNA. Formation of pseudouridine at positions 38, 39 and 40 in the anticodon stem and loop of transfer RNAs. The protein is tRNA pseudouridine synthase A of Streptococcus pneumoniae serotype 19F (strain G54).